A 369-amino-acid chain; its full sequence is p21-activated protein kinase-interacting protein 1-like (369 aa).

WD repeat units lie at residues A33–A70, Q73–S111, A114–I153, T195–E233, and A236–P278. Residues A311–E369 are disordered. Composition is skewed to basic residues over residues K338–K350 and Q358–E369.

The protein localises to the nucleus. The protein resides in the nucleolus. In terms of biological role, negatively regulates the PAK1 kinase. PAK1 is a member of the PAK kinase family, which has been shown to play a positive role in the regulation of signaling pathways involving MAPK8 and RELA. PAK1 exists as an inactive homodimer, which is activated by binding of small GTPases such as CDC42 to an N-terminal regulatory domain. PAK1IP1 also binds to the N-terminus of PAK1, and inhibits the specific activation of PAK1 by CDC42. May be involved in ribosomal large subunit assembly. The polypeptide is p21-activated protein kinase-interacting protein 1-like (PAK1IP1) (Gallus gallus (Chicken)).